Consider the following 309-residue polypeptide: Protoheme IX farnesyltransferase 2 (309 aa).

8 consecutive transmembrane segments (helical) span residues Phe35–Val55, Met59–Ile79, Ala107–Trp127, Leu131–Leu151, Ile159–Gly179, Trp186–Ala206, Leu238–Ile258, and Phe289–Leu309.

This sequence belongs to the UbiA prenyltransferase family. Protoheme IX farnesyltransferase subfamily.

Its subcellular location is the cell inner membrane. The catalysed reaction is heme b + (2E,6E)-farnesyl diphosphate + H2O = Fe(II)-heme o + diphosphate. It functions in the pathway porphyrin-containing compound metabolism; heme O biosynthesis; heme O from protoheme: step 1/1. Functionally, converts heme B (protoheme IX) to heme O by substitution of the vinyl group on carbon 2 of heme B porphyrin ring with a hydroxyethyl farnesyl side group. The protein is Protoheme IX farnesyltransferase 2 of Pseudoalteromonas translucida (strain TAC 125).